The primary structure comprises 300 residues: Inosose dehydratase (300 aa).

Belongs to the IolE/MocC family. Glutathione is required as a cofactor. It depends on Co(2+) as a cofactor. Requires Mn(2+) as cofactor.

It carries out the reaction scyllo-inosose = 3D-3,5/4-trihydroxycyclohexane-1,2-dione + H2O. It functions in the pathway polyol metabolism; myo-inositol degradation into acetyl-CoA; acetyl-CoA from myo-inositol: step 2/7. Its function is as follows. Catalyzes the dehydration of inosose (2-keto-myo-inositol, 2KMI or 2,4,6/3,5-pentahydroxycyclohexanone) to 3D-(3,5/4)-trihydroxycyclohexane-1,2-dione (D-2,3-diketo-4-deoxy-epi-inositol). This chain is Inosose dehydratase, found in Bacillus licheniformis (strain ATCC 14580 / DSM 13 / JCM 2505 / CCUG 7422 / NBRC 12200 / NCIMB 9375 / NCTC 10341 / NRRL NRS-1264 / Gibson 46).